A 529-amino-acid chain; its full sequence is MFPLTEENKHVAQLLLNTGTCPRCIFRFCGVDFHAPYKLPYKELLNELQKFLETEKDELILEVMNPPPKKIRLQELEDSIDNLSQNGEGRISVSHVGSTASKNSNLNVCNVCLGILQEFCEKDFIKKVCQKVEASGFEFTSLVFSVSFPPQLSVREHAAWLLVKQEMGKQSLSLGRDDIVQLKEAYKWITHPLFSEELGVPIDGKSLFEVSVVFAHPETVEDCHFLAAICPDCFKPAKNKQSVFTRMAVMKALNKIKEEDFLKQFPCPPNSPKAVCAVLEIECAHGAVFVAGRYNKYSRNLPQTPWIIDGERKLESSVEELISDHLLAVFKAESFNFSSSGREDVDVRTLGNGRPFAIELVNPHRVHFTSQEIKELQQKINNSSNKIQVRDLQLVTREAIGHMKEGEEEKTKTYSALIWTNKAIQKKDIEFLNDIKDLKIDQKTPLRVLHRRPLAVRARVIHFMETQYVDEHHFRLHLKTQAGTYIKEFVHGDFGRTKPNIGSLMNVTADILELDVESVDVDWPPALDD.

Zn(2+) contacts are provided by cysteine 21 and cysteine 24. The stretch at 42 to 89 (KELLNELQKFLETEKDELILEVMNPPPKKIRLQELEDSIDNLSQNGEG) forms a coiled coil. Residues serine 79 and serine 84 each carry the phosphoserine modification. Positions 109 and 112 each coordinate Zn(2+). The tract at residues 304 to 317 (TPWIIDGERKLESS) is RNA binding forefinger loop. Residue aspartate 344 is the Nucleophile of the active site. An RNA binding thumb loop region spans residues 442–457 (QKTPLRVLHRRPLAVR).

The protein belongs to the pseudouridine synthase Pus10 family. As to quaternary structure, interacts with components of the microprocessor complex DROSHA and DGCR8. In terms of processing, proteolytically cleaved during TRAIL-induced cell death. Cleaved, in vitro, either by caspase-3 (CASP3) or caspase-8 (CASP8).

It is found in the nucleus. The protein resides in the cytoplasm. Its subcellular location is the mitochondrion. It carries out the reaction uridine(55) in tRNA = pseudouridine(55) in tRNA. It catalyses the reaction uridine(54) in tRNA = pseudouridine(54) in tRNA. Protein with different functions depending on its subcellular location: involved in miRNA processing in the nucleus and acts as a tRNA pseudouridylate synthase in the cytoplasm. In the cytoplasm, acts as a pseudouridylate synthase by catalyzing synthesis of pseudouridine(54) and pseudouridine(55) from uracil-54 and uracil-55, respectively, in the psi GC loop of a subset of tRNAs. tRNA pseudouridylate synthase activity is enhanced by the presence of 1-methyladenosine at position 53-61 of tRNAs. Does not show tRNA pseudouridylate synthase activity in the nucleus. In the nucleus, promotes primary microRNAs (pri-miRNAs) processing independently of its RNA pseudouridylate synthase activity. Binds pri-miRNAs. Modulator of TRAIL/TNFSF10-induced cell death via activation of procaspase-8 and BID cleavage. Required for the progression of the apoptotic signal through intrinsic mitochondrial cell death. This is tRNA pseudouridine synthase Pus10 from Homo sapiens (Human).